Reading from the N-terminus, the 187-residue chain is Proenkephalin-A (187 aa).

4 consecutive propeptides follow at residues 52-70 (MDEL…EILA), 80-143 (DAEE…KMLQ), 153-163 (VGRPEWWMDYQ), and 173-187 (FADS…ESYS). A disordered region spans residues 81 to 132 (AEEEEDALASSSDLLKELLGPGETETAAAPRGRDDEDVSKSHGGFMRALKGS). The span at 88 to 99 (LASSSDLLKELL) shows a compositional bias: low complexity. A compositionally biased stretch (basic and acidic residues) spans 111 to 120 (RGRDDEDVSK). Residue serine 187 is modified to Phosphoserine.

It belongs to the opioid neuropeptide precursor family. Post-translationally, processed and degraded by ACE. The N-terminal domain contains 6 conserved cysteines thought to be involved in disulfide bonding and/or processing. In terms of processing, proenkephalin-A is cleaved by CTSL to generate Met-enkephalin.

It is found in the cytoplasmic vesicle. The protein resides in the secretory vesicle. Its subcellular location is the chromaffin granule lumen. It localises to the secreted. Functionally, neuropeptide that competes with and mimic the effects of opiate drugs. They play a role in a number of physiologic functions, including pain perception and responses to stress. This chain is Proenkephalin-A (PENK), found in Felis catus (Cat).